We begin with the raw amino-acid sequence, 113 residues long: Hemerythrin (113 aa).

Fe cation contacts are provided by H25, H54, E58, H73, H77, H101, and D106.

Belongs to the hemerythrin family. As to quaternary structure, homooctamer.

Hemerythrin is a respiratory protein in blood cells of certain marine worms. The oxygen-binding site in each chain contains two iron atoms. The chain is Hemerythrin from Themiste dyscrita (Peanut worm).